The sequence spans 374 residues: Probable quinol oxidase subunit 2 (374 aa).

The signal sequence occupies residues 1–19 (MSKFKSLLLMFGTLILLSG). The N-palmitoyl cysteine moiety is linked to residue cysteine 20. Cysteine 20 is lipidated: S-diacylglycerol cysteine. Helical transmembrane passes span 43-63 (SIIF…IFIF) and 82-102 (IETI…IPTV). Residues 321-374 (MKPMILGNNDPYDNEFKKEEDHNSKEMEKISKSAKDENASKFGSKADNDHGGGH) form a disordered region. Residues 334–374 (NEFKKEEDHNSKEMEKISKSAKDENASKFGSKADNDHGGGH) are compositionally biased toward basic and acidic residues.

Belongs to the cytochrome c oxidase subunit 2 family.

The protein resides in the cell membrane. The catalysed reaction is 2 a quinol + O2 = 2 a quinone + 2 H2O. In terms of biological role, catalyzes quinol oxidation with the concomitant reduction of oxygen to water. Subunit II transfers the electrons from a quinol to the binuclear center of the catalytic subunit I. In Staphylococcus haemolyticus (strain JCSC1435), this protein is Probable quinol oxidase subunit 2 (qoxA).